A 260-amino-acid chain; its full sequence is ATP synthase subunit a (260 aa).

The next 7 membrane-spanning stretches (helical) occupy residues 29–49, 95–115, 124–144, 151–171, 191–211, 213–233, and 237–257; these read FSFT…LLLI, FFPC…QGMI, HFLI…IVGF, FFSF…LVLL, MMAG…MLCM, EIFY…LTGL, and VAIL…NDAI.

This sequence belongs to the ATPase A chain family. F-type ATPases have 2 components, CF(1) - the catalytic core - and CF(0) - the membrane proton channel. CF(1) has five subunits: alpha(3), beta(3), gamma(1), delta(1), epsilon(1). CF(0) has three main subunits: a, b and c.

It localises to the mitochondrion inner membrane. In terms of biological role, mitochondrial membrane ATP synthase (F(1)F(0) ATP synthase or Complex V) produces ATP from ADP in the presence of a proton gradient across the membrane which is generated by electron transport complexes of the respiratory chain. F-type ATPases consist of two structural domains, F(1) - containing the extramembraneous catalytic core and F(0) - containing the membrane proton channel, linked together by a central stalk and a peripheral stalk. During catalysis, ATP synthesis in the catalytic domain of F(1) is coupled via a rotary mechanism of the central stalk subunits to proton translocation. Key component of the proton channel; it may play a direct role in the translocation of protons across the membrane. The chain is ATP synthase subunit a (ATP6) from Brassica napus (Rape).